The sequence spans 596 residues: Cell adhesion molecule CEACAM20 (596 aa).

The N-terminal stretch at Met1–Ala30 is a signal peptide. Over Gln31–Gly450 the chain is Extracellular. Ig-like C2-type domains lie at Pro58 to Leu154, Pro160 to Lys246, Pro256 to Thr341, and Pro346 to Leu432. Cys90 and Cys138 are disulfide-bonded. Asn96 and Asn105 each carry an N-linked (GlcNAc...) asparagine glycan. The cysteines at positions 276 and 324 are disulfide-linked. 5 N-linked (GlcNAc...) asparagine glycosylation sites follow: Asn280, Asn306, Asn317, Asn368, and Asn415. Residues Cys375 and Cys416 are joined by a disulfide bond. Residues Ile451–Ile471 form a helical membrane-spanning segment. The Cytoplasmic segment spans residues Arg472–Glu585. Disordered regions lie at residues Pro477–Glu510 and Gln527–Pro563. Positions Glu501–Glu510 are enriched in low complexity. The span at Trp553 to Pro562 shows a compositional bias: pro residues. Phosphotyrosine occurs at positions 578 and 589.

It belongs to the immunoglobulin superfamily. CEA family. Interacts (via extracellular domain) with PTPRH (via extracellular domain); the interaction dephosphorylates CEACAM20. Interacts (phosphorylated form) with SYK (via SH2 domains); the interaction further enhances CEACAM20 phosphorylation. Phosphorylated on tyrosine residues by SYK, SRC and FYN in vitro.

The protein localises to the cell projection. It is found in the microvillus membrane. The protein resides in the apical cell membrane. Together with the tyrosine-protein kinase SYK, enhances production of the cytokine CXCL8/IL-8 via the NFKB pathway and may thus have a role in the intestinal immune response. This chain is Cell adhesion molecule CEACAM20, found in Homo sapiens (Human).